Reading from the N-terminus, the 286-residue chain is Polyamine aminopropyltransferase (286 aa).

The region spanning 5–238 is the PABS domain; that stretch reads TMWHETLHDQ…GIMTFAWATD (234 aa). Gln-33 lines the S-methyl-5'-thioadenosine pocket. 2 residues coordinate spermidine: His-64 and Asp-88. Residues Glu-108 and 140–141 contribute to the S-methyl-5'-thioadenosine site; that span reads DG. Asp-158 acts as the Proton acceptor in catalysis. 158-161 is a binding site for spermidine; that stretch reads DCTD. Pro-165 contacts S-methyl-5'-thioadenosine.

Belongs to the spermidine/spermine synthase family. Homodimer or homotetramer.

It is found in the cytoplasm. The enzyme catalyses S-adenosyl 3-(methylsulfanyl)propylamine + putrescine = S-methyl-5'-thioadenosine + spermidine + H(+). It participates in amine and polyamine biosynthesis; spermidine biosynthesis; spermidine from putrescine: step 1/1. Its function is as follows. Catalyzes the irreversible transfer of a propylamine group from the amino donor S-adenosylmethioninamine (decarboxy-AdoMet) to putrescine (1,4-diaminobutane) to yield spermidine. This chain is Polyamine aminopropyltransferase, found in Salmonella paratyphi A (strain ATCC 9150 / SARB42).